The primary structure comprises 329 residues: Glycerol-3-phosphate dehydrogenase [NAD(P)+] (329 aa).

4 residues coordinate NADPH: serine 10, tryptophan 11, arginine 31, and lysine 105. Sn-glycerol 3-phosphate is bound by residues lysine 105, glycine 134, and serine 136. NADPH is bound at residue alanine 138. Residues lysine 189, aspartate 242, serine 252, arginine 253, and asparagine 254 each contribute to the sn-glycerol 3-phosphate site. The active-site Proton acceptor is lysine 189. Arginine 253 lines the NADPH pocket. NADPH is bound by residues valine 277 and glutamate 279.

Belongs to the NAD-dependent glycerol-3-phosphate dehydrogenase family.

It localises to the cytoplasm. The catalysed reaction is sn-glycerol 3-phosphate + NAD(+) = dihydroxyacetone phosphate + NADH + H(+). It catalyses the reaction sn-glycerol 3-phosphate + NADP(+) = dihydroxyacetone phosphate + NADPH + H(+). The protein operates within membrane lipid metabolism; glycerophospholipid metabolism. Catalyzes the reduction of the glycolytic intermediate dihydroxyacetone phosphate (DHAP) to sn-glycerol 3-phosphate (G3P), the key precursor for phospholipid synthesis. The protein is Glycerol-3-phosphate dehydrogenase [NAD(P)+] of Neisseria meningitidis serogroup C (strain 053442).